A 618-amino-acid chain; its full sequence is Glucose starvation modulator protein 1 (618 aa).

The zn(2)-C6 fungal-type DNA-binding region spans 20–48; that stretch reads CEFCHTKHIQCDVGRPCQNCLKRNIGKFC. The segment at 325–353 is disordered; that stretch reads ANANTQPSHNAKLESECDSSSHSDADLEK. Residues 335–353 are compositionally biased toward basic and acidic residues; the sequence is AKLESECDSSSHSDADLEK. Residues 466–538 enclose the PAS domain; sequence LLDLENMAKL…QIFNELLAFG (73 aa).

This sequence belongs to the ERT1/acuK family.

It localises to the nucleus. Functionally, transcription factor which regulates nonfermentable carbon utilization. Binds specifically to 5'-CGGN(8)CGG-3' and 5'-CGGN(9)CGG-3' sequences in the promoter region. This chain is Glucose starvation modulator protein 1 (GSM1), found in Saccharomyces cerevisiae (strain JAY291) (Baker's yeast).